Consider the following 90-residue polypeptide: Small ribosomal subunit protein uS15c (90 aa).

Belongs to the universal ribosomal protein uS15 family. As to quaternary structure, part of the 30S ribosomal subunit.

It is found in the plastid. Its subcellular location is the chloroplast. The polypeptide is Small ribosomal subunit protein uS15c (rps15) (Piper cenocladum (Ant piper)).